Here is a 232-residue protein sequence, read N- to C-terminus: Putative dimethylsulfoniopropionate lyase DddL (232 aa).

4 residues coordinate a divalent metal cation: His154, Glu159, Tyr161, and His190.

The protein belongs to the non-heme iron-dependent dioxygenase family. In terms of assembly, homodimer. Requires a divalent metal cation as cofactor.

The enzyme catalyses S,S-dimethyl-beta-propiothetin = acrylate + dimethyl sulfide + H(+). In terms of biological role, may cleave dimethylsulfoniopropionate (DMSP), releasing dimethyl sulfide (DMS). DMS is the principal form by which sulfur is transported from oceans to the atmosphere. The real activity of the protein is however subject to debate and it is unclear whether it constitutes a real dimethylsulfoniopropionate lyase in vivo. The chain is Putative dimethylsulfoniopropionate lyase DddL (dddL) from Cereibacter sphaeroides (strain ATCC 17023 / DSM 158 / JCM 6121 / CCUG 31486 / LMG 2827 / NBRC 12203 / NCIMB 8253 / ATH 2.4.1.) (Rhodobacter sphaeroides).